We begin with the raw amino-acid sequence, 233 residues long: Snake venom serine protease ussurase (233 aa).

The region spanning 1-224 (VIGGVECNIN…YTDWIQSIIS (224 aa)) is the Peptidase S1 domain. 6 cysteine pairs are disulfide-bonded: cysteine 7–cysteine 138, cysteine 25–cysteine 41, cysteine 73–cysteine 231, cysteine 117–cysteine 185, cysteine 149–cysteine 164, and cysteine 175–cysteine 200. Histidine 40 functions as the Charge relay system in the catalytic mechanism. Asparagine 54 carries an N-linked (GlcNAc...) asparagine glycan. Aspartate 85 functions as the Charge relay system in the catalytic mechanism. Serine 179 acts as the Charge relay system in catalysis.

Belongs to the peptidase S1 family. Snake venom subfamily. Monomer. Expressed by the venom gland.

The protein resides in the secreted. Snake venom serine protease that may act in the hemostasis system of the prey. This chain is Snake venom serine protease ussurase, found in Gloydius ussuriensis (Ussuri mamushi).